Reading from the N-terminus, the 365-residue chain is Eukaryotic translation initiation factor 3 subunit H (365 aa).

In terms of domain architecture, MPN spans 11–160; that stretch reads VKVEALVVMK…LRAFRLSPKF (150 aa).

This sequence belongs to the eIF-3 subunit H family. As to quaternary structure, component of the eukaryotic translation initiation factor 3 (eIF-3) complex.

The protein localises to the cytoplasm. Functionally, component of the eukaryotic translation initiation factor 3 (eIF-3) complex, which is involved in protein synthesis of a specialized repertoire of mRNAs and, together with other initiation factors, stimulates binding of mRNA and methionyl-tRNAi to the 40S ribosome. The eIF-3 complex specifically targets and initiates translation of a subset of mRNAs involved in cell proliferation. This chain is Eukaryotic translation initiation factor 3 subunit H, found in Aspergillus terreus (strain NIH 2624 / FGSC A1156).